We begin with the raw amino-acid sequence, 65 residues long: Subtilisin inhibitor CLSI-I (65 aa).

Belongs to the protease inhibitor I13 (potato type I serine protease inhibitor) family.

Inhibits subtilisin-type microbial serine proteases including proteinase K, subtilisin BPN', subtilisin Carlsberg, subtilisin E, A.oryzae protease and S.griseus alkaline protease. Weakly inhibits pronase E. Does not inhibit trypsin or chymotrypsin. The sequence is that of Subtilisin inhibitor CLSI-I from Canavalia lineata (Beach bean).